Consider the following 316-residue polypeptide: LIM/homeobox protein lim-6 (316 aa).

2 consecutive LIM zinc-binding domains span residues 40 to 101 and 102 to 163; these read KLCS…LYGK and RCRR…ICNF. A DNA-binding region (homeobox) is located at residues 186–245; that stretch reads PKRPRTILNAQQRRQFKTAFERSSKPSRKVREQLANETGLSVRVVQVWFQNQRAKIKKLN. The segment at 244-297 is disordered; it reads LNKKDSDSGDTFKHGPGSEGRSTEDIRSSDDEEESVINLDADEVETSETSSYTD. Positions 246–256 are enriched in basic and acidic residues; the sequence is KKDSDSGDTFK. Over residues 273–289 the composition is skewed to acidic residues; the sequence is DDEEESVINLDADEVET.

It localises to the nucleus. Its function is as follows. Transcription factor. Required for the terminal differentiation of sensory- and motor-neurons, especially GABAergic neurons, and for morphological aspects of uterine development. Plays a role in the cell-type-specific regulation of glutamic acid decarboxylase unc-25. Involved in promoting sleep-like behavioral quiescence, acting by modulating expression of transcription factor aptf-1 in the single sleep-active ring interneuron RIS. Plays a role in regulation of RIS differentiation. Required for the functional asymmetry of the ASER and ASEL chemosensory neuron pair, conferring the ability to discriminate sodium from chloride, perhaps by modulating expression of receptor-type guanylate cyclases, such as gcy-5. Involved in regulating postembryonic axon maintenance in the ventral nerve cord, acting in concert with LIM homeobox protein ceh-14, via modulation of expression of immunoglobulin domain zig genes in the interneuron PVT. May play a role in the functions of the excretory gland cell. This Caenorhabditis elegans protein is LIM/homeobox protein lim-6.